Consider the following 272-residue polypeptide: Alpha-tubulin N-acetyltransferase (272 aa).

The N-acetyltransferase domain maps to Met-1 to Phe-186. Acetyl-CoA is bound by residues Phe-120–Arg-133 and Ser-156–Lys-165. The disordered stretch occupies residues Thr-216 to Gly-244. Over residues Ser-224–Gly-244 the composition is skewed to low complexity.

This sequence belongs to the acetyltransferase ATAT1 family.

The catalysed reaction is L-lysyl-[alpha-tubulin] + acetyl-CoA = N(6)-acetyl-L-lysyl-[alpha-tubulin] + CoA + H(+). Specifically acetylates 'Lys-40' in alpha-tubulin on the lumenal side of microtubules. Promotes microtubule destabilization and accelerates microtubule dynamics; this activity may be independent of acetylation activity. Acetylates alpha-tubulin with a slow enzymatic rate, due to a catalytic site that is not optimized for acetyl transfer. Enters the microtubule through each end and diffuses quickly throughout the lumen of microtubules. Acetylates only long/old microtubules because of its slow acetylation rate since it does not have time to act on dynamically unstable microtubules before the enzyme is released. The chain is Alpha-tubulin N-acetyltransferase from Aedes aegypti (Yellowfever mosquito).